The following is a 741-amino-acid chain: MSKDGPFRFGARGLWTSGQALLFLDPLGVWMGTPMNDTYVAVEALSEAAARKELARLSELLARANAEYHRDDAPSLSDADYDALKQRNAAIEARFPDLKRGDSPSDQVGAAPSDTFSKVTHAVRMLSLANAFSDEDIRDFDTRIRRFLGLAEDAPLAYTAEPKIDGLSLSLRYEHGTLVQAATRGDGAVGENVTANARTIDDIPHRLDGAPEVLEVRGEVYMSHADFAELNARQAETGGKTFANPRNAAAGSLRQLDAEITRARPLKFFAYAWGEISAPLAETQTETLARFREFGFTINPLTVRCETPEDMLAQYRAIEAQRATLGYDIDGVVYKLDDLDLQRRLGFRSTTPRWAIAHKFPAELAWTRLEAIDIQVGRTGALSPVARLAPVTVGGVVVSNATLHNEDYIQGRDNTGAPIRWGTDIRVGDWVQVYRAGDVIPKIRDVDLSRRPEGAAPFDFPTTCPECGSDAPREPGDAVRRCSGGLICPAQAVEKLKHFVSRGALDIDGLGAKQVEQFYRDGWIAEPADIFTLRARFGQGLQQLKNREGWGDKSAENLFRAIDTARTAPFAKVLFGLGIRHIGESASSLLANHYLTMEALLAAVDAAVDETSDAWADLLNIDGVGEVMARALVTTLTQEAERASVNRLLAQIDPAPATPPQVGDSPVAGKTLVFTGTLETMSRAEAKATAEALGAKVAGSVSAKTDLLIAGPGAGSKATKAEALGIEVIDEDAWRVLAGLA.

Residues D78 to D82, S127 to L128, and E161 contribute to the NAD(+) site. Residue K163 is the N6-AMP-lysine intermediate of the active site. Positions 184, 219, 335, and 359 each coordinate NAD(+). C464, C467, C482, and C488 together coordinate Zn(2+). In terms of domain architecture, BRCT spans V662–A741.

This sequence belongs to the NAD-dependent DNA ligase family. LigA subfamily. The cofactor is Mg(2+). Requires Mn(2+) as cofactor.

The catalysed reaction is NAD(+) + (deoxyribonucleotide)n-3'-hydroxyl + 5'-phospho-(deoxyribonucleotide)m = (deoxyribonucleotide)n+m + AMP + beta-nicotinamide D-nucleotide.. DNA ligase that catalyzes the formation of phosphodiester linkages between 5'-phosphoryl and 3'-hydroxyl groups in double-stranded DNA using NAD as a coenzyme and as the energy source for the reaction. It is essential for DNA replication and repair of damaged DNA. The protein is DNA ligase of Dinoroseobacter shibae (strain DSM 16493 / NCIMB 14021 / DFL 12).